A 111-amino-acid chain; its full sequence is Auxin-repressed 12.5 kDa protein (111 aa).

A disordered region spans residues 18-111; sequence ERGLGMLRKV…SGETRSKHHR (94 aa). Residues 43–57 show a composition bias toward low complexity; the sequence is TMPTTPTTPVTPTTP. The segment covering 74 to 95 has biased composition (polar residues); sequence SNLSSKTMGNQVFDSPQPNSPT.

It belongs to the DRM1/ARP family.

The protein is Auxin-repressed 12.5 kDa protein of Fragaria ananassa (Strawberry).